Consider the following 620-residue polypeptide: Translocator protein BipB (620 aa).

A disordered region spans residues 58-95 (QCDAQPAAHDARLDDKPALRAPQERDAPPLGASDTGSR). The span at 66-84 (HDARLDDKPALRAPQERDA) shows a compositional bias: basic and acidic residues. Residues 309 to 339 (EMQAKREAELQKKSDEYQAQVKKAEEMQKTM) are a coiled coil. The next 3 membrane-spanning stretches (helical) occupy residues 355-375 (FAAA…GLAL), 401-421 (AILK…LVAC), and 430-450 (LAGA…AAFV).

The protein belongs to the SctE/SipB/YopB family.

It localises to the secreted. It is found in the host membrane. In terms of biological role, plays a role in the bacterium-induced formation of multinucleated giant cell (MNGC), which is formed after host cell fusion, as well as in the intercellular spreading of bacteria and in the induction of apoptosis in macrophages. May act in concert with other effector proteins to induce fusion of host cell membranes. The polypeptide is Translocator protein BipB (bipB) (Burkholderia pseudomallei (strain 1710b)).